A 520-amino-acid chain; its full sequence is CBL-interacting serine/threonine-protein kinase 18 (520 aa).

Disordered regions lie at residues 1-29 (MAQA…PHPK) and 48-67 (TDKD…SPRN). A compositionally biased stretch (pro residues) spans 17 to 29 (PDPPPPPPPPHPK). Low complexity predominate over residues 55 to 66 (SPQSPRSPRSPR). The region spanning 74 to 328 (YELGKLLGHG…IPEIMKNRWF (255 aa)) is the Protein kinase domain. ATP contacts are provided by residues 80 to 88 (LGHGTFAKV) and K103. D196 functions as the Proton acceptor in the catalytic mechanism. An activation loop region spans residues 214-243 (DFGLSAVAEQLRQDGLCHTFCGTPAYIAPE). A Phosphoserine modification is found at S218. The residue at position 232 (T232) is a Phosphothreonine. The disordered stretch occupies residues 349–368 (EDEEEEASSSGRSSTVSESD). The span at 356–366 (SSSGRSSTVSE) shows a compositional bias: low complexity. The 25-residue stretch at 382–406 (PRPSSLNAFDIISFSSGFDLSGLFE) folds into the NAF domain. The PPI stretch occupies residues 410–439 (GEGTRFVSGAPVSKIISKLEEIAKIVSFTV).

Belongs to the protein kinase superfamily. CAMK Ser/Thr protein kinase family. SNF1 subfamily. Interacts with CBL1 and CBL9. It depends on Mn(2+) as a cofactor.

It carries out the reaction L-seryl-[protein] + ATP = O-phospho-L-seryl-[protein] + ADP + H(+). The catalysed reaction is L-threonyl-[protein] + ATP = O-phospho-L-threonyl-[protein] + ADP + H(+). Its function is as follows. CIPK serine-threonine protein kinases interact with CBL proteins. Binding of a CBL protein to the regulatory NAF domain of CIPK protein lead to the activation of the kinase in a calcium-dependent manner. This chain is CBL-interacting serine/threonine-protein kinase 18 (CIPK18), found in Arabidopsis thaliana (Mouse-ear cress).